The chain runs to 139 residues: 3-hydroxyacyl-[acyl-carrier-protein] dehydratase FabZ (139 aa).

His-46 is an active-site residue.

The protein belongs to the thioester dehydratase family. FabZ subfamily.

It localises to the cytoplasm. It carries out the reaction a (3R)-hydroxyacyl-[ACP] = a (2E)-enoyl-[ACP] + H2O. Its function is as follows. Involved in unsaturated fatty acids biosynthesis. Catalyzes the dehydration of short chain beta-hydroxyacyl-ACPs and long chain saturated and unsaturated beta-hydroxyacyl-ACPs. This chain is 3-hydroxyacyl-[acyl-carrier-protein] dehydratase FabZ, found in Streptococcus pyogenes serotype M1.